The primary structure comprises 745 residues: MASLVTLPAIAFSNPATASGAVRLRAAAFRCWALRRRGWAVAAAVASPNSVLSEHAFKRLQLGSDDEDEEGPYGSDADEGFQGDEEELAIARLGLPDELVATLEKRGITHLFPIQRAVLIPALGGRDLIARAKTGTGKTLAFGIPMIKQLMEQDDGRSTRRGRTPRVLVLAPTRELAKQVEKEIKESAPKLGTVCVYGGVSYNVQQNALSRGVDVVVGTPGRIIDLINGGSLQLGEVQYLVLDEADQMLAVGFEEDVETILQQLPADRQSMLFSATMPSWVKKLSRRYLNNPLTIDLVGDQDEKLAEGIKLHAIPLTATSKRTILSDLITVYAKGGKTIVFTRTKKDADEVSLALTTSIASEALHGDISQHQRERTLNGFRQGKFTVLVATDVAARGLDIPNVDLIIHYELPNDPETFVHRSGRTGRAGKAGTAILMFTSSQKRTVMSLERDVGCKFEFISPPSIEEVLESSAEHVIATLRGVHPESTQYFLGAAEKLTEELGPHALASALAHLSGFSQPPSSRSLISYEQGWVTLQLTREPGYGRGFFSPRSVTGFLSDVCSAAADEVGKIYITADENVQGAVFDLPEEIAKDLLTMEVPPGNTLTKISKLPALQDDSPATDSYGRFSNDRGSRNRRSRGGGASRGRGGWDTDSEDRYRRGGRSLRSDNDSWSDDDWSGGGRKSNRSSSSFGGRSSSYGSRGSPSPSFGVRSSSLGGRESSRSFSGACFNCGESGHRASDCPNK.

The transit peptide at 1–41 (MASLVTLPAIAFSNPATASGAVRLRAAAFRCWALRRRGWAV) directs the protein to the chloroplast. The Q motif motif lies at 88–116 (LAIARLGLPDELVATLEKRGITHLFPIQR). The Helicase ATP-binding domain maps to 119 to 295 (LIPALGGRDL…RRYLNNPLTI (177 aa)). 132 to 139 (AKTGTGKT) is a binding site for ATP. The short motif at 243 to 246 (DEAD) is the DEAD box element. The 146-residue stretch at 324-469 (ILSDLITVYA…ISPPSIEEVL (146 aa)) folds into the Helicase C-terminal domain. The tract at residues 606-724 (LTKISKLPAL…SLGGRESSRS (119 aa)) is disordered. A compositionally biased stretch (gly residues) spans 641 to 650 (GGGASRGRGG). Positions 656–670 (EDRYRRGGRSLRSDN) are enriched in basic and acidic residues. Low complexity predominate over residues 687–724 (RSSSSFGGRSSSYGSRGSPSPSFGVRSSSLGGRESSRS). The CCHC-type zinc finger occupies 727–744 (GACFNCGESGHRASDCPN).

Belongs to the DEAD box helicase family. DDX21/DDX50 subfamily.

The protein localises to the plastid. The protein resides in the chloroplast. The enzyme catalyses ATP + H2O = ADP + phosphate + H(+). Its function is as follows. Nuclear genome-encoded factor involved in ribosome biogenesis in chloroplasts. Binds specific group II introns in chloroplasts and facilitates their splicing. Required for normal development of chloroplasts. This Zea mays (Maize) protein is DEAD-box ATP-dependent RNA helicase 3A, chloroplastic.